We begin with the raw amino-acid sequence, 173 residues long: HTH-type transcriptional regulator IscR (173 aa).

Positions 2-131 (RLTSKGRYAV…NNITLGELMM (130 aa)) constitute an HTH rrf2-type domain. Positions 28 to 51 (LADISERQGISLSYLEQLFSKLRK) form a DNA-binding region, H-T-H motif. Residues Cys92, Cys98, and Cys104 each contribute to the [2Fe-2S] cluster site.

Requires [2Fe-2S] cluster as cofactor.

Its function is as follows. Regulates the transcription of several operons and genes involved in the biogenesis of Fe-S clusters and Fe-S-containing proteins. The sequence is that of HTH-type transcriptional regulator IscR from Vibrio cholerae serotype O1 (strain ATCC 39315 / El Tor Inaba N16961).